Here is a 229-residue protein sequence, read N- to C-terminus: Auxin-responsive protein IAA17 (229 aa).

Positions L14–L18 match the EAR-like (transcriptional repression) motif. One can recognise a PB1 domain in the interval A110–G211.

This sequence belongs to the Aux/IAA family. Homodimers and heterodimers. Interacts with the auxin response factors ARF1 and IAA24. Interacts with IAA1. Interacts with TPL. Interacts (via PB1 domain) with ARF7 (via PB1 domain). In terms of processing, phosphorylated by phytochrome A in vitro.

It localises to the nucleus. In terms of biological role, aux/IAA proteins are short-lived transcriptional factors that function as repressors of early auxin response genes at low auxin concentrations. Repression is thought to result from the interaction with auxin response factors (ARFs), proteins that bind to the auxin-responsive promoter element (AuxRE). Formation of heterodimers with ARF proteins may alter their ability to modulate early auxin response genes expression. The polypeptide is Auxin-responsive protein IAA17 (IAA17) (Arabidopsis thaliana (Mouse-ear cress)).